Consider the following 396-residue polypeptide: Chalcone synthase A (396 aa).

Residue cysteine 170 is part of the active site.

The protein belongs to the thiolase-like superfamily. Chalcone/stilbene synthases family.

The enzyme catalyses (E)-4-coumaroyl-CoA + 3 malonyl-CoA + 3 H(+) = 2',4,4',6'-tetrahydroxychalcone + 3 CO2 + 4 CoA. The protein operates within secondary metabolite biosynthesis; flavonoid biosynthesis. Its function is as follows. The primary product of this enzyme is 4,2',4',6'-tetrahydroxychalcone (also termed naringenin-chalcone or chalcone) which can under specific conditions spontaneously isomerize into naringenin. This chain is Chalcone synthase A (CHSA), found in Ipomoea purpurea (Common morning glory).